Consider the following 275-residue polypeptide: uncharacterized protein (275 aa).

The region spanning 1–162 (NLFSVIVSLI…ITSYWTEVQR (162 aa)) is the ABC transmembrane type-1 domain. 3 helical membrane passes run 21–41 (LYLVCTLPILIIVILPIGNIM), 106–126 (IMNLILFINIFGILFLGYYLM), and 137–157 (FAYVLYLFQIINPIVSITSYW).

It localises to the cell membrane. This is an uncharacterized protein from Staphylococcus epidermidis.